The chain runs to 413 residues: Tryptophan synthase beta chain (413 aa).

Lys106 carries the N6-(pyridoxal phosphate)lysine modification.

This sequence belongs to the TrpB family. As to quaternary structure, tetramer of two alpha and two beta chains. Pyridoxal 5'-phosphate is required as a cofactor.

It catalyses the reaction (1S,2R)-1-C-(indol-3-yl)glycerol 3-phosphate + L-serine = D-glyceraldehyde 3-phosphate + L-tryptophan + H2O. It functions in the pathway amino-acid biosynthesis; L-tryptophan biosynthesis; L-tryptophan from chorismate: step 5/5. Its function is as follows. The beta subunit is responsible for the synthesis of L-tryptophan from indole and L-serine. The protein is Tryptophan synthase beta chain of Methylorubrum populi (strain ATCC BAA-705 / NCIMB 13946 / BJ001) (Methylobacterium populi).